Here is a 640-residue protein sequence, read N- to C-terminus: MGKIIGIDLGTTNSCVAIMDGGKARVIENSEGDRTTPSIVAYTKDGEVLVGASAKRQAVTNPKNTFYAVKRLIGRKFTDAEVQKDIAHVPYSILAHDNGDAWVATSDGKKMAPQEISAKVLEKMKKTAEDFLGEKVTEAVITVPAYFNDSQRQATKDAGRIAGLDVKRIINEPTAAALAYGLDKGDNKDRKIVVYDLGGGTFDVSVIEIANVDGEKQFEVLATNGDTFLGGEDFDNRVIEYLVEEFNKDQGIDLRKDPLALQRLKDAAERAKIELSSAQQTEVNLPYVTADASGPKHLNIKLTRAKLEALVDDLIKKSIEPCRVALNDAGLRSSDISEVILVGGQTRMPKVQQAVTEFFGKEPRKDVNPDEAVALGAAIQGGVLGGDVKDVLLLDVTPLSLGIETMGGVFTKIIEKNTTIPTKASQVFSTAEDNQSAVTVHVLQGEREQARFNKSLAKFDLSGIEPAPRGLPQVEVSFDIDANGILHVSAKDKKTNKEQKVEIKAGSGLSEEEIARMVADAEANREEDKKFQELVQARNQADALIHGTRSAITEHGSKVGGDVIGKVEAALADLETAMKGDDKAQIEAKSKALEEAGQSLFAAASADQGGAPGADAGNAGKAQDDVVDAEFTEVKDDKKS.

Position 201 is a phosphothreonine; by autocatalysis (T201). A compositionally biased stretch (low complexity) spans 603–621 (AASADQGGAPGADAGNAGK). The segment at 603–625 (AASADQGGAPGADAGNAGKAQDD) is disordered.

This sequence belongs to the heat shock protein 70 family.

Its function is as follows. Acts as a chaperone. The sequence is that of Chaperone protein DnaK from Stenotrophomonas maltophilia (strain K279a).